We begin with the raw amino-acid sequence, 939 residues long: Zinc finger RNA-binding protein 2 (939 aa).

Disordered regions lie at residues 1-72 (MATS…AYGS), 116-185 (GRMT…IVTS), 217-264 (FYPP…PKAG), 289-314 (HLGG…SPRG), 360-389 (LEPA…ASSR), 401-449 (ALCE…DAQP), 545-590 (RLEE…SSDD), and 906-939 (RLGA…EGLV). Polar residues-rich tracts occupy residues 137–147 (PHGSHSHAQPP) and 157–184 (QPAS…SIVT). A compositionally biased stretch (pro residues) spans 217 to 239 (FYPPAQPPPPPGPPQQLPPPPAP). The stretch at 516–549 (KVLEERMRKQRHLAEERLEQLRRWHAERRRLEEE) forms a coiled coil. Residues 570–935 (RPESPASAPL…GEKKRGRRGG (366 aa)) enclose the DZF domain. Residues 906 to 916 (RLGARFRKRQR) are compositionally biased toward basic residues.

The sequence is that of Zinc finger RNA-binding protein 2 (ZFR2) from Homo sapiens (Human).